A 544-amino-acid chain; its full sequence is Chaperonin GroEL (544 aa).

ATP contacts are provided by residues 30–33 (TLGP), Lys51, 87–91 (DGTTT), Gly415, and Asp495.

Belongs to the chaperonin (HSP60) family. Forms a cylinder of 14 subunits composed of two heptameric rings stacked back-to-back. Interacts with the co-chaperonin GroES.

It localises to the cytoplasm. It catalyses the reaction ATP + H2O + a folded polypeptide = ADP + phosphate + an unfolded polypeptide.. Together with its co-chaperonin GroES, plays an essential role in assisting protein folding. The GroEL-GroES system forms a nano-cage that allows encapsulation of the non-native substrate proteins and provides a physical environment optimized to promote and accelerate protein folding. The sequence is that of Chaperonin GroEL from Bartonella bacilliformis.